Reading from the N-terminus, the 367-residue chain is Voltage-gated potassium channel subunit beta-2 (367 aa).

3 positions are modified to phosphoserine: Ser9, Ser14, and Ser20. An Asymmetric dimethylarginine; alternate modification is found at Arg28. Omega-N-methylarginine; alternate is present on Arg28. A Phosphoserine modification is found at Ser31. 4 residues coordinate NADP(+): Thr56, Trp57, Gln63, and Asp85. Catalysis depends on Tyr90, which acts as the Proton donor/acceptor. Ser112 is modified (phosphoserine). Lys124 carries the N6-acetyllysine modification. The NADP(+) site is built by Asn158, Ser188, Arg189, Gln214, Trp243, Ser244, Pro245, Leu246, Ala247, Cys248, Lys254, Tyr262, Arg264, Gly323, Ser325, Gln329, Glu332, and Asn333.

It belongs to the shaker potassium channel beta subunit family. Homotetramer. Interaction with tetrameric potassium channel alpha subunits gives rise to a heterooctamer. Identified in potassium channel complexes containing KCNA1, KCNA2, KCNA4, KCNA5, KCNA6, KCNAB1, KCNAB2 and KCND3. Interacts (in unphosphorylated form) with MAPRE1. Forms a ternary complex with SQSTM1 and PRKCZ. In terms of processing, phosphorylated by PRKCZ; may be regulated by incorporation in a complex composed of PRKCZ and SQSTM1. As to expression, detected in brain. Detected at basket cell terminals in cerebellum and in the juxtaparanodal region of nodes of Ranvier (at protein level). Strongest expression in brain and eye. Highest levels in brain detected in brainstem and diencephalon. Strong expression also detected in lung and heart. Moderate expression in kidney, T-lymphocytes and skeletal muscle.

The protein localises to the cytoplasm. Its subcellular location is the membrane. The protein resides in the cell membrane. It localises to the cell projection. It is found in the axon. The protein localises to the synapse. Its subcellular location is the synaptosome. The protein resides in the cytoskeleton. It catalyses the reaction hydroxyacetone + NADP(+) = methylglyoxal + NADPH + H(+). The enzyme catalyses (E)-4-oxonon-2-en-1-ol + NADP(+) = (E)-4-oxonon-2-enal + NADPH + H(+). Regulatory subunit of the voltage-gated potassium (Kv) Shaker channel family. Shaker channels are composed of pore-forming and potassium-conducting alpha subunits and of regulatory beta subunits. The beta-2/KCNAB2 subunit promotes potassium channel closure via a mechanism that does not involve physical obstruction of the channel pore. Promotes the inactivation of Kv1.4/KCNA4 and Kv1.5/KCNA5 alpha subunit-containing channels. Displays nicotinamide adenine dinucleotide phosphate (NADPH)-dependent aldoketoreductase activity by catalyzing the NADPH-dependent reduction of a wide range of aldehyde and ketone substrates. Substrate specificity includes methylglyoxal, 9,10-phenanthrenequinone, prostaglandin J2, 4-nitrobenzaldehyde, 4-nitroacetophenone and 4-oxo-trans-2-nonenal (in vitro, no physiological substrate identified yet). The binding of oxidized and reduced nucleotide cofactors alters Kv channel gating and may contribute to dynamic fine tuning of cell excitability. Contributes to the regulation of nerve signaling, and prevents neuronal hyperexcitability. The protein is Voltage-gated potassium channel subunit beta-2 of Mus musculus (Mouse).